Here is a 147-residue protein sequence, read N- to C-terminus: 3-dehydroquinate dehydratase (147 aa).

Y24 serves as the catalytic Proton acceptor. Substrate-binding residues include N75, H81, and D88. The active-site Proton donor is the H101. Substrate is bound by residues 102–103 and R112; that span reads IS.

This sequence belongs to the type-II 3-dehydroquinase family. Homododecamer.

It catalyses the reaction 3-dehydroquinate = 3-dehydroshikimate + H2O. It functions in the pathway metabolic intermediate biosynthesis; chorismate biosynthesis; chorismate from D-erythrose 4-phosphate and phosphoenolpyruvate: step 3/7. In terms of biological role, catalyzes a trans-dehydration via an enolate intermediate. This chain is 3-dehydroquinate dehydratase, found in Cereibacter sphaeroides (strain ATCC 17023 / DSM 158 / JCM 6121 / CCUG 31486 / LMG 2827 / NBRC 12203 / NCIMB 8253 / ATH 2.4.1.) (Rhodobacter sphaeroides).